A 323-amino-acid chain; its full sequence is Quinolinate synthase (323 aa).

The iminosuccinate site is built by H37 and S54. C99 is a binding site for [4Fe-4S] cluster. Residues 125 to 127 (YIN) and S142 contribute to the iminosuccinate site. C185 is a [4Fe-4S] cluster binding site. Iminosuccinate-binding positions include 211-213 (HPE) and T228. C278 serves as a coordination point for [4Fe-4S] cluster.

It belongs to the quinolinate synthase family. Type 2 subfamily. [4Fe-4S] cluster serves as cofactor.

Its subcellular location is the cytoplasm. It carries out the reaction iminosuccinate + dihydroxyacetone phosphate = quinolinate + phosphate + 2 H2O + H(+). The protein operates within cofactor biosynthesis; NAD(+) biosynthesis; quinolinate from iminoaspartate: step 1/1. Catalyzes the condensation of iminoaspartate with dihydroxyacetone phosphate to form quinolinate. The chain is Quinolinate synthase from Trichodesmium erythraeum (strain IMS101).